Reading from the N-terminus, the 277-residue chain is 4-hydroxy-3-prenylphenylpyruvate oxygenase/4-hydroxy-3-prenylbenzoate synthase (277 aa).

Belongs to the aldolase class II family. As to quaternary structure, homotetramer. Fe(2+) is required as a cofactor.

The catalysed reaction is 3-dimethylallyl-4-hydroxyphenylpyruvate + O2 = 3-dimethylallyl-4-hydroxymandelate + CO2. It carries out the reaction 3-dimethylallyl-4-hydroxymandelate + O2 = 3-dimethylallyl-4-hydroxybenzoate + CO2 + H2O. It participates in antibiotic biosynthesis. With respect to regulation, activated by ascorbate. Functionally, involved in the biosynthesis of ring A of the aminocoumarin antibiotic clorobiocin. Catalyzes two consecutive oxidative decarboxylations of 3-dimethylallyl-4-hydroxyphenylpyruvate (3DMA-4HPP) to yield 3-dimethylallyl-4-hydroxybenzoate (3DMA-4HB) via the 3-dimethylallyl-4-hydroxymandelic acid (3DMA-4HMA) intermediate. The chain is 4-hydroxy-3-prenylphenylpyruvate oxygenase/4-hydroxy-3-prenylbenzoate synthase from Streptomyces roseochromogenus subsp. oscitans.